The following is a 113-amino-acid chain: MAQQRKLGLPTDHRRAMLRNLVTSFLKNGKVETTITRAKEARNMAEKMITLAKRGDLHARRQVLAYVTEKEVVDHLFAEIAPKYADRNGGYTRMYKMGPRRGDGAEVVILELV.

The protein belongs to the bacterial ribosomal protein bL17 family. In terms of assembly, part of the 50S ribosomal subunit. Contacts protein L32.

This Clostridium novyi (strain NT) protein is Large ribosomal subunit protein bL17.